Here is a 37-residue protein sequence, read N- to C-terminus: Large ribosomal subunit protein bL36c (37 aa).

Belongs to the bacterial ribosomal protein bL36 family.

The protein resides in the plastid. The protein localises to the organellar chromatophore. This Paulinella chromatophora protein is Large ribosomal subunit protein bL36c.